The primary structure comprises 294 residues: Cytidine deaminase (294 aa).

CMP/dCMP-type deaminase domains lie at 48–168 (DEDA…FGPK) and 186–294 (LTGD…VLLG). Substrate is bound at residue 89–91 (NME). H102 contributes to the Zn(2+) binding site. E104 serves as the catalytic Proton donor. The Zn(2+) site is built by C129 and C132.

It belongs to the cytidine and deoxycytidylate deaminase family. As to quaternary structure, homodimer. It depends on Zn(2+) as a cofactor.

The catalysed reaction is cytidine + H2O + H(+) = uridine + NH4(+). It catalyses the reaction 2'-deoxycytidine + H2O + H(+) = 2'-deoxyuridine + NH4(+). In terms of biological role, this enzyme scavenges exogenous and endogenous cytidine and 2'-deoxycytidine for UMP synthesis. This chain is Cytidine deaminase, found in Salmonella paratyphi A (strain ATCC 9150 / SARB42).